Here is a 464-residue protein sequence, read N- to C-terminus: Argininosuccinate lyase (464 aa).

It belongs to the lyase 1 family. Argininosuccinate lyase subfamily.

Its subcellular location is the cytoplasm. The catalysed reaction is 2-(N(omega)-L-arginino)succinate = fumarate + L-arginine. It functions in the pathway amino-acid biosynthesis; L-arginine biosynthesis; L-arginine from L-ornithine and carbamoyl phosphate: step 3/3. The polypeptide is Argininosuccinate lyase (Streptococcus suis (strain 98HAH33)).